Reading from the N-terminus, the 306-residue chain is Bifunctional protein FolD (306 aa).

Residues 166–168 (GRS) and Ile232 contribute to the NADP(+) site.

This sequence belongs to the tetrahydrofolate dehydrogenase/cyclohydrolase family. Homodimer.

It catalyses the reaction (6R)-5,10-methylene-5,6,7,8-tetrahydrofolate + NADP(+) = (6R)-5,10-methenyltetrahydrofolate + NADPH. The enzyme catalyses (6R)-5,10-methenyltetrahydrofolate + H2O = (6R)-10-formyltetrahydrofolate + H(+). It functions in the pathway one-carbon metabolism; tetrahydrofolate interconversion. Functionally, catalyzes the oxidation of 5,10-methylenetetrahydrofolate to 5,10-methenyltetrahydrofolate and then the hydrolysis of 5,10-methenyltetrahydrofolate to 10-formyltetrahydrofolate. The polypeptide is Bifunctional protein FolD (Methylorubrum extorquens (strain CM4 / NCIMB 13688) (Methylobacterium extorquens)).